The sequence spans 276 residues: S-adenosylmethionine decarboxylase proenzyme (276 aa).

S124 functions as the Schiff-base intermediate with substrate; via pyruvic acid in the catalytic mechanism. S124 is subject to Pyruvic acid (Ser); by autocatalysis. H129 acts as the Proton acceptor; for processing activity in catalysis. C152 (proton donor; for catalytic activity) is an active-site residue.

This sequence belongs to the prokaryotic AdoMetDC family. Type 2 subfamily. In terms of assembly, heterooctamer of four alpha and four beta chains arranged as a tetramer of alpha/beta heterodimers. Pyruvate serves as cofactor. Is synthesized initially as an inactive proenzyme. Formation of the active enzyme involves a self-maturation process in which the active site pyruvoyl group is generated from an internal serine residue via an autocatalytic post-translational modification. Two non-identical subunits are generated from the proenzyme in this reaction, and the pyruvate is formed at the N-terminus of the alpha chain, which is derived from the carboxyl end of the proenzyme. The post-translation cleavage follows an unusual pathway, termed non-hydrolytic serinolysis, in which the side chain hydroxyl group of the serine supplies its oxygen atom to form the C-terminus of the beta chain, while the remainder of the serine residue undergoes an oxidative deamination to produce ammonia and the pyruvoyl group blocking the N-terminus of the alpha chain.

The enzyme catalyses S-adenosyl-L-methionine + H(+) = S-adenosyl 3-(methylsulfanyl)propylamine + CO2. It functions in the pathway amine and polyamine biosynthesis; S-adenosylmethioninamine biosynthesis; S-adenosylmethioninamine from S-adenosyl-L-methionine: step 1/1. Functionally, catalyzes the decarboxylation of S-adenosylmethionine to S-adenosylmethioninamine (dcAdoMet), the propylamine donor required for the synthesis of the polyamines spermine and spermidine from the diamine putrescine. This Desulfitobacterium hafniense (strain DSM 10664 / DCB-2) protein is S-adenosylmethionine decarboxylase proenzyme.